A 194-amino-acid chain; its full sequence is Fe/S biogenesis protein NfuA (194 aa).

Positions 152 and 155 each coordinate [4Fe-4S] cluster.

It belongs to the NfuA family. As to quaternary structure, homodimer. [4Fe-4S] cluster is required as a cofactor.

In terms of biological role, involved in iron-sulfur cluster biogenesis. Binds a 4Fe-4S cluster, can transfer this cluster to apoproteins, and thereby intervenes in the maturation of Fe/S proteins. Could also act as a scaffold/chaperone for damaged Fe/S proteins. The protein is Fe/S biogenesis protein NfuA of Stutzerimonas stutzeri (strain A1501) (Pseudomonas stutzeri).